A 491-amino-acid polypeptide reads, in one-letter code: Protein nucleotidyltransferase YdiU (491 aa).

ATP is bound by residues glycine 94, glycine 96, arginine 97, lysine 117, aspartate 129, glycine 130, arginine 180, and arginine 187. The Proton acceptor role is filled by aspartate 256. Positions 257 and 266 each coordinate Mg(2+). Aspartate 266 is a binding site for ATP.

The protein belongs to the SELO family. Requires Mg(2+) as cofactor. The cofactor is Mn(2+).

It carries out the reaction L-seryl-[protein] + ATP = 3-O-(5'-adenylyl)-L-seryl-[protein] + diphosphate. The catalysed reaction is L-threonyl-[protein] + ATP = 3-O-(5'-adenylyl)-L-threonyl-[protein] + diphosphate. The enzyme catalyses L-tyrosyl-[protein] + ATP = O-(5'-adenylyl)-L-tyrosyl-[protein] + diphosphate. It catalyses the reaction L-histidyl-[protein] + UTP = N(tele)-(5'-uridylyl)-L-histidyl-[protein] + diphosphate. It carries out the reaction L-seryl-[protein] + UTP = O-(5'-uridylyl)-L-seryl-[protein] + diphosphate. The catalysed reaction is L-tyrosyl-[protein] + UTP = O-(5'-uridylyl)-L-tyrosyl-[protein] + diphosphate. Nucleotidyltransferase involved in the post-translational modification of proteins. It can catalyze the addition of adenosine monophosphate (AMP) or uridine monophosphate (UMP) to a protein, resulting in modifications known as AMPylation and UMPylation. The polypeptide is Protein nucleotidyltransferase YdiU (Clostridium botulinum (strain Okra / Type B1)).